Reading from the N-terminus, the 305-residue chain is Phosphatidate cytidylyltransferase (305 aa).

A run of 8 helical transmembrane segments spans residues 27–47, 67–87, 96–116, 124–144, 150–170, 202–222, 232–252, and 277–297; these read FLVI…VGLL, FPFS…ALTC, FPEH…IRLV, LGPI…SVPI, ILYG…AIFL, TVVG…LFYS, IAVP…GFFG, and MLDV…ILLI.

This sequence belongs to the CDS family.

Its subcellular location is the cell membrane. It carries out the reaction a 1,2-diacyl-sn-glycero-3-phosphate + CTP + H(+) = a CDP-1,2-diacyl-sn-glycerol + diphosphate. It functions in the pathway phospholipid metabolism; CDP-diacylglycerol biosynthesis; CDP-diacylglycerol from sn-glycerol 3-phosphate: step 3/3. This is Phosphatidate cytidylyltransferase (cdsA) from Chlamydia trachomatis serovar D (strain ATCC VR-885 / DSM 19411 / UW-3/Cx).